We begin with the raw amino-acid sequence, 594 residues long: 3-hydroxy-3-methylglutaryl coenzyme A reductase 2-A (594 aa).

Residues 1-32 (MDVRRRPVKSLSSAKTATAGEPPKSQQQHPKA) form a disordered region. The Lumenal segment spans residues 1–37 (MDVRRRPVKSLSSAKTATAGEPPKSQQQHPKASDALP). Residues 38–58 (LPLYLTNGLFFTMFFSVMYFL) traverse the membrane as a helical segment. Over 59-81 (LHRWREKIRNSTPLHVVTLSELA) the chain is Cytoplasmic. A helical transmembrane segment spans residues 82–102 (ALVLLMASVIYLLGFFGIGFV). The Lumenal portion of the chain corresponds to 103–549 (RSVIRPSPDA…SKESPGSNSR (447 aa)). The N-linked (GlcNAc...) asparagine glycan is linked to N261. E273 serves as the catalytic Charge relay system. N-linked (GlcNAc...) asparagine glycosylation occurs at N337. Residues K405 and D481 each act as charge relay system in the active site. The chain crosses the membrane as a helical span at residues 550–570 (LLASIVAGSVLAGELSLMSAL). At 571–594 (AAGQLVKSHMKYNRSSKDITKLSS) the chain is on the cytoplasmic side. H579 functions as the Proton donor in the catalytic mechanism.

It belongs to the HMG-CoA reductase family. Mostly expressed in the petioles of seedlings, seedlings and roots, and, to a lower extent, in seeds, leaves, stems and flowers.

The protein localises to the endoplasmic reticulum membrane. Its subcellular location is the plastid. It localises to the chloroplast membrane. It is found in the peroxisome membrane. It carries out the reaction (R)-mevalonate + 2 NADP(+) + CoA = (3S)-3-hydroxy-3-methylglutaryl-CoA + 2 NADPH + 2 H(+). Its pathway is metabolic intermediate biosynthesis; (R)-mevalonate biosynthesis; (R)-mevalonate from acetyl-CoA: step 3/3. Competitive inhibition by mevinolin (Mev) is leading to a significant reduction of total ginsenoside in adventitious roots. Triggered by darkness. Functionally, catalyzes the synthesis of mevalonate, the specific precursor of all isoprenoid compounds present in plants. Component of the triterpene saponins (e.g. ginsenosides or panaxosides) and phytosterols biosynthetic pathways. This chain is 3-hydroxy-3-methylglutaryl coenzyme A reductase 2-A, found in Panax ginseng (Korean ginseng).